A 474-amino-acid polypeptide reads, in one-letter code: L-arabinose isomerase (474 aa).

Mn(2+)-binding residues include E306, E331, H348, and H447.

Belongs to the arabinose isomerase family. Mn(2+) serves as cofactor.

It carries out the reaction beta-L-arabinopyranose = L-ribulose. The protein operates within carbohydrate degradation; L-arabinose degradation via L-ribulose; D-xylulose 5-phosphate from L-arabinose (bacterial route): step 1/3. Functionally, catalyzes the conversion of L-arabinose to L-ribulose. The polypeptide is L-arabinose isomerase (Levilactobacillus brevis (strain ATCC 367 / BCRC 12310 / CIP 105137 / JCM 1170 / LMG 11437 / NCIMB 947 / NCTC 947) (Lactobacillus brevis)).